A 539-amino-acid chain; its full sequence is GMP synthase [glutamine-hydrolyzing] (539 aa).

One can recognise a Glutamine amidotransferase type-1 domain in the interval 4-202 (KILILDFGSQ…VLGIAGCKPD (199 aa)). The active-site Nucleophile is cysteine 81. Residues histidine 176 and glutamate 178 contribute to the active site. The region spanning 203–395 (WVMRDHIEEA…LGLPPEMVYR (193 aa)) is the GMPS ATP-PPase domain. 230 to 236 (SGGVDSS) lines the ATP pocket.

In terms of assembly, homodimer.

It carries out the reaction XMP + L-glutamine + ATP + H2O = GMP + L-glutamate + AMP + diphosphate + 2 H(+). It participates in purine metabolism; GMP biosynthesis; GMP from XMP (L-Gln route): step 1/1. Its function is as follows. Catalyzes the synthesis of GMP from XMP. This Cupriavidus necator (strain ATCC 17699 / DSM 428 / KCTC 22496 / NCIMB 10442 / H16 / Stanier 337) (Ralstonia eutropha) protein is GMP synthase [glutamine-hydrolyzing].